A 406-amino-acid polypeptide reads, in one-letter code: Argininosuccinate synthase (406 aa).

Residues 11-19 and Ala-38 each bind ATP; that span reads AYSGGLDTS. Residues Tyr-91 and Ser-96 each contribute to the L-citrulline site. Residue Gly-121 coordinates ATP. L-aspartate contacts are provided by Thr-123, Asn-127, and Asp-128. L-citrulline is bound at residue Asn-127. L-citrulline is bound by residues Arg-131, Ser-181, Ser-190, Glu-266, and Tyr-278.

Belongs to the argininosuccinate synthase family. Type 1 subfamily. Homotetramer.

Its subcellular location is the cytoplasm. The enzyme catalyses L-citrulline + L-aspartate + ATP = 2-(N(omega)-L-arginino)succinate + AMP + diphosphate + H(+). It participates in amino-acid biosynthesis; L-arginine biosynthesis; L-arginine from L-ornithine and carbamoyl phosphate: step 2/3. In Campylobacter curvus (strain 525.92), this protein is Argininosuccinate synthase.